Reading from the N-terminus, the 73-residue chain is U-scoloptoxin(15)-Sm3a (73 aa).

An N-terminal signal peptide occupies residues M1 to A23.

The protein belongs to the scoloptoxin-15 family. In terms of processing, contains 2 disulfide bonds. Expressed by the venom gland.

The protein resides in the secreted. The sequence is that of U-scoloptoxin(15)-Sm3a from Scolopendra morsitans (Tanzanian blue ringleg centipede).